Reading from the N-terminus, the 1147-residue chain is MSFLFKRNKGSAHKPTKPNFSKTSTTPSTSQLKHSHESNVKMSTSTVTEHRKKPTGSGSHITASPWSKLTVRGSSNVLPRYSHASHLYAEGGQEIYIFGGVASDSQPKNDLWVLNLATSQFTSLRSLGETPSPRLGHASILIGNAFIVFGGLTNHDVADRQDNSLYLLNTSSLVWQKANASGARPSGRYGHTISCLGSKICLFGGRLLDYYFNDLVCFDLNNLNTSDSRWELASVVNDPPPARAGHVAFTFSDKLYIFGGTDGANFFNDLWCYHPKQSAWSKVETFGVAPNPRAGHAASVVEGILYVFGGRASDGTFLNDLYAFRLSSKHWYKLSDLPFTPSPRSSHTLSCSGLTLVLIGGKQGKGASDSNVYMLDTSRFRLGSVPTTSGRQRNTSFFSNSTGNTNPSAFNGLLTSSRIPSYNGSKVRSTSHPSRQQYIGSSNSRFNTRHQTISTPVSGRASNDLPSPVVPTRSNSSSILQPSYNLNSHSSDRRNTNDDDQSSLNSQQLSNQAKAQGEVSPTLSFVPSSHSMEQGNGSVASANNAQSEAATRSINSISEVSEVRFPEQSSVKTVDERKSLDGRITSVTLETLVEKYSELSKQQIVEWFKSKLYEILRDSASKIDSLTEKLKVANAEKNAALCEAALEKVPLAKHNKLSDGTFSTPDKENVQSTNDAHIMQENFSLHKALEVMRETSSDLDKQLKDATASQKELIVQTSSFQKELVEERERHNAISKRLQEIESLYRDRELLVTNLEDQLVDQTVTINKFAFERDQFRERSMGFENTIKDLTRKMEATDMLNVSLHESLRSVQTENSELVTEMALLKAELVKKQAIIDANANIYDKLTADHTNYETVSADINQNLKETLDKLLNGSSDFKNNEIELLHDQIRITNAKLEKREKLINASKYIEDTLRSEIQEAAEKVSNLEFSNFNLKEENSNMQLQLMKALEQRNTGAKQLVNLRMQLSTATSELDMLKLKLRTTALALEESPDDYSDILSILRADMSPFHDLHKQCGVLIDTLNGVKRGFGIFEKKFTDYHKFLENISDKLKSEEDTSLETPIHENQSIQSDQIKEVGEVLSAIKSLSDSVMLLKNQIDDLAKEKLPLSSSDDEKVNIKEKTDFMKLLVKSGLSNPPAKEPVHDNEN.

Positions 1–16 (MSFLFKRNKGSAHKPT) are enriched in basic residues. The segment at 1–64 (MSFLFKRNKG…TGSGSHITAS (64 aa)) is disordered. The span at 18-32 (PNFSKTSTTPSTSQL) shows a compositional bias: polar residues. 6 Kelch repeats span residues 94–144 (EIYI…LIGN), 146–198 (FIVF…CLGS), 199–253 (KICL…TFSD), 254–303 (KLYI…VVEG), 305–351 (LYVF…TLSC), and 355–402 (TLVL…SNST). Disordered regions lie at residues 384–403 (SVPT…NSTG) and 408–547 (SAFN…NAQS). Polar residues-rich tracts occupy residues 385–403 (VPTT…NSTG), 408–465 (SAFN…SNDL), and 472–489 (TRSN…LNSH). The segment covering 502–512 (SSLNSQQLSNQ) has biased composition (low complexity). Serine 503 is subject to Phosphoserine. Residues 519-547 (VSPTLSFVPSSHSMEQGNGSVASANNAQS) are compositionally biased toward polar residues. The interaction with tea4 stretch occupies residues 538 to 1147 (SVASANNAQS…AKEPVHDNEN (610 aa)). Coiled-coil stretches lie at residues 611 to 649 (KLYE…LEKV), 716 to 838 (QTSS…IIDA), 879 to 990 (KNNE…ALEE), and 1084 to 1105 (IKSL…AKEK). Positions 948 to 1147 (KALEQRNTGA…AKEPVHDNEN (200 aa)) are retention at microtubule cell ends.

As to quaternary structure, major component of the tea1 cell-end complex. Interacts with rax2, tea4 and tip1. Interacts with for3 in the presence of tea4.

The protein resides in the cytoplasm. The protein localises to the cytoskeleton. Cell polarity protein. Acts as an end marker, directing the growth machinery to the cell poles. Involved in the regulation of microtubular organization, affecting the maintenance of a single central axis. Prevents the curling of microtubule tips around the cell ends and is required for the retention of polarity factors such as pom1, tip1 and tea2 at the cell ends, necessary for the cell to grow in a straight line. Links tip1 and tea4 in a common complex. The protein is Tip elongation aberrant protein 1 (tea1) of Schizosaccharomyces pombe (strain 972 / ATCC 24843) (Fission yeast).